The sequence spans 671 residues: UvrABC system protein C (671 aa).

Residues 1 to 20 (MPHLPDSMSPEAPAGPAPAT) are disordered. Over residues 10 to 20 (PEAPAGPAPAT) the composition is skewed to low complexity. In terms of domain architecture, GIY-YIG spans 37–115 (PLPGVYRYFD…IKTLNPKYNI (79 aa)). Residues 232–267 (RQVMEALEARMMAHAEKLEFEQAAELRNQVAALSNV) enclose the UVR domain.

This sequence belongs to the UvrC family. As to quaternary structure, interacts with UvrB in an incision complex.

The protein resides in the cytoplasm. Functionally, the UvrABC repair system catalyzes the recognition and processing of DNA lesions. UvrC both incises the 5' and 3' sides of the lesion. The N-terminal half is responsible for the 3' incision and the C-terminal half is responsible for the 5' incision. This chain is UvrABC system protein C, found in Albidiferax ferrireducens (strain ATCC BAA-621 / DSM 15236 / T118) (Rhodoferax ferrireducens).